The chain runs to 944 residues: MGPPPPLRRQRLLLPRPSRRRPPARLASGRRSSRPGSSWTWYATLIASLVWYPTVSSTTLEATVVSSTDGGATGQASGGGGGGAGDSTPSESPETSADTTVPRERVTGTEWVSNLTSERYPYRICSMSQGTDIVRFARTITCAPYDAKSVSTEGIMLIYKANIVPYTFDVFTYQKELFFQRSYAYIYTTYLLGNSREHVALPLWEVDAANIWNYCYSSYVRTIGTEQYVSYHQDSYRNETMWLIPEEYQSGNTRRYVTVKDQYHVYGSTWLYKETCSMNCIVTQTKAKSKYPYDYFALSSGLVVEASPFYDTVNGHTFHENRRKFHVREQYRMLERFGAVNAPVRVVPKMAFLERPDIVLAWEIKEPKNVTCHLALWETVNRAIRTEHATSFHFVSRGLTATFVTAKANETLYNNSRYDCIRDSANRTIDRVFREEYDGKYELDGDPVIFTTNGGLTVVWQGLRQKALAALSALAGIPGANGTTNHSRHRRDTAAIAAREHASDLTYAQLQFAYDTIRDYVNQAIGHIAEAWCLEQRRTGEMLHELSKINPSSMLTAIYDRPIAARLAGDVIALAKCVEVDQDTVQVQRDMRKFETSVDGTEEQGQFCYSRPVVLFRFVNSSETQYGQLGEDNEILLGTFRTEACQLPSLKIFVAGKVAYEYRDYLYKRQIDLDSIDVVNTMISLKVEPLENTDFQVLELYSRGELKSANVFDLEDIMREYNAHKLRLRYITSKIVNPIPPFMRGLDDFMSGLGAAGKGLGLVLGAVGGAVASVVGGFVSFFTNPFGSLTLIILVVAVVVIVFLLYQRQRSAVRQPLDFFFPYLAQQTQRHQQTVTTTEYLDSPPPYAERDSYKSGPPDPAAEGLGGSGALPGSSATAATKYTTEDAWQMLLAIRRLDEEKREVPTMVAPSARPPSQQGPGLLDRIRRRGYRRLRDTGSDSELA.

Disordered regions lie at residues methionine 1–serine 37 and threonine 68–glycine 108. The signal sequence occupies residues methionine 1 to valine 55. Over residues alanine 24–serine 37 the composition is skewed to low complexity. Over serine 56 to proline 785 the chain is Virion surface. A compositionally biased stretch (gly residues) spans glycine 71–glycine 85. A compositionally biased stretch (polar residues) spans proline 89–threonine 99. The N-linked (GlcNAc...) asparagine; by host glycan is linked to asparagine 114. Intrachain disulfides connect cysteine 125–cysteine 577, cysteine 142–cysteine 533, cysteine 215–cysteine 280, cysteine 372–cysteine 420, and cysteine 608–cysteine 645. An involved in fusion and/or binding to host membrane region spans residues serine 182–threonine 188. An N-linked (GlcNAc...) asparagine; by host glycan is attached at asparagine 238. The segment at glycine 267–glutamate 274 is involved in fusion and/or binding to host membrane. Asparagine 369, asparagine 409, asparagine 414, asparagine 426, asparagine 481, asparagine 485, and asparagine 620 each carry an N-linked (GlcNAc...) asparagine; by host glycan. 2 hydrophobic membrane proximal region regions span residues isoleucine 731 to threonine 783 and leucine 762 to phenylalanine 782. Residues phenylalanine 786–tyrosine 806 traverse the membrane as a helical segment. The Intravirion segment spans residues glutamine 807–alanine 944. Disordered stretches follow at residues threonine 834–alanine 878 and arginine 902–alanine 944. The Internalization motif signature appears at tyrosine 931–leucine 934.

This sequence belongs to the herpesviridae glycoprotein B family. Homotrimer; disulfide-linked. Binds to heparan sulfate proteoglycans. Interacts with gH/gL heterodimer. In terms of processing, a proteolytic cleavage by host furin generates two subunits that remain linked by disulfide bonds.

It is found in the virion membrane. The protein resides in the host cell membrane. The protein localises to the host endosome membrane. Its subcellular location is the host Golgi apparatus membrane. Functionally, envelope glycoprotein that forms spikes at the surface of virion envelope. Essential for the initial attachment to heparan sulfate moieties of the host cell surface proteoglycans. Involved in fusion of viral and cellular membranes leading to virus entry into the host cell. Following initial binding to its host receptors, membrane fusion is mediated by the fusion machinery composed at least of gB and the heterodimer gH/gL. May be involved in the fusion between the virion envelope and the outer nuclear membrane during virion egress. This Tupaiid herpesvirus (strain 2) (TuHV-2) protein is Envelope glycoprotein B.